A 372-amino-acid polypeptide reads, in one-letter code: Zinc finger protein dpff-1 (372 aa).

Residues 108 to 204 form a disordered region; that stretch reads VGPTTESVSD…SRSIVKETKY (97 aa). Residues 109 to 131 show a composition bias toward polar residues; sequence GPTTESVSDSSNDSTTIRPSRQT. Positions 132–141 are enriched in basic and acidic residues; sequence QIKEEYRDDY. The span at 142–158 shows a compositional bias: acidic residues; sequence VLDDELSPDEFGSDEDD. Residues 184 to 196 are compositionally biased toward polar residues; that stretch reads TTRSSVSRLTPSR. The C2H2-type zinc-finger motif lies at 212 to 235; it reads YPCDKCSAKYKSLAGLSYHQSYLH. 2 consecutive PHD-type zinc fingers follow at residues 256-314 and 316-361; these read SCDF…CKSC and ICGT…CQVE.

It belongs to the requiem/DPF family.

It is found in the nucleus. The protein resides in the cytoplasm. Functionally, probable transcription factor, involved in meiosis and stress protection. The protein is Zinc finger protein dpff-1 of Caenorhabditis elegans.